Consider the following 359-residue polypeptide: Protein mab-21-like 2 (359 aa).

Belongs to the mab-21 family.

Its subcellular location is the nucleus. It localises to the cytoplasm. Functionally, required for several aspects of embryonic development including normal development of the eye. This Xenopus tropicalis (Western clawed frog) protein is Protein mab-21-like 2 (mab21l2).